Reading from the N-terminus, the 446-residue chain is Exopolygalacturonase (446 aa).

Residues 1-17 form the signal peptide; that stretch reads MRVTDIISCALLQASIA. N-linked (GlcNAc...) asparagine glycosylation is found at N53, N118, N134, and N204. The stretch at 236 to 257 is one PbH1 1 repeat; it reads SDNIIIQNSNINNGDDCVSFKP. D250 acts as the Proton donor in catalysis. C252 and C269 are oxidised to a cystine. 2 N-linked (GlcNAc...) asparagine glycosylation sites follow: N258 and N270. PbH1 repeat units follow at residues 259–279, 290–311, and 332–353; these read STNILVQNLVCNGSHGISVGS, VENILVRNISMSNASDGARIKV, and VRNVTYDGMIVKNVDYAIEITQ. H273 is a catalytic residue. N-linked (GlcNAc...) asparagine glycans are attached at residues N297, N302, N334, N359, and N369. 2 PbH1 repeats span residues 367-398 and 403-434; these read PSNLTISDITIKNFKGTTSKKYDPRVGYVVCS and CSDISIENIDVKSPSGTNLFTCANAEGIQSQV. 2 disulfide bridges follow: C397/C403 and C424/C436. N435 carries N-linked (GlcNAc...) asparagine glycosylation.

Belongs to the glycosyl hydrolase 28 family.

The protein resides in the secreted. The catalysed reaction is [(1-&gt;4)-alpha-D-galacturonosyl](n) + H2O = alpha-D-galacturonate + [(1-&gt;4)-alpha-D-galacturonosyl](n-1). Its function is as follows. Hydrolysis of 1,4-alpha-D-galactosiduronic linkages in pectate and other galacturonans. The polypeptide is Exopolygalacturonase (PGX1) (Cochliobolus carbonum (Maize leaf spot fungus)).